A 141-amino-acid polypeptide reads, in one-letter code: Large ribosomal subunit protein uL11 (141 aa).

Belongs to the universal ribosomal protein uL11 family. In terms of assembly, part of the ribosomal stalk of the 50S ribosomal subunit. Interacts with L10 and the large rRNA to form the base of the stalk. L10 forms an elongated spine to which L12 dimers bind in a sequential fashion forming a multimeric L10(L12)X complex. Post-translationally, one or more lysine residues are methylated.

In terms of biological role, forms part of the ribosomal stalk which helps the ribosome interact with GTP-bound translation factors. The polypeptide is Large ribosomal subunit protein uL11 (Clostridium kluyveri (strain ATCC 8527 / DSM 555 / NBRC 12016 / NCIMB 10680 / K1)).